Reading from the N-terminus, the 660-residue chain is Acetyl-coenzyme A synthetase (660 aa).

CoA is bound by residues 197-200 (RGGK) and Thr-317. ATP contacts are provided by residues 397–399 (GEP), 421–426 (DTFWQT), Asp-512, and Arg-528. Ser-536 provides a ligand contact to CoA. Residue Arg-539 coordinates ATP. Mg(2+)-binding residues include Val-550 and Val-555. An N6-acetyllysine modification is found at Lys-625.

It belongs to the ATP-dependent AMP-binding enzyme family. Requires Mg(2+) as cofactor. Acetylated. Deacetylation by the SIR2-homolog deacetylase activates the enzyme.

It catalyses the reaction acetate + ATP + CoA = acetyl-CoA + AMP + diphosphate. Catalyzes the conversion of acetate into acetyl-CoA (AcCoA), an essential intermediate at the junction of anabolic and catabolic pathways. AcsA undergoes a two-step reaction. In the first half reaction, AcsA combines acetate with ATP to form acetyl-adenylate (AcAMP) intermediate. In the second half reaction, it can then transfer the acetyl group from AcAMP to the sulfhydryl group of CoA, forming the product AcCoA. This chain is Acetyl-coenzyme A synthetase, found in Cupriavidus taiwanensis (strain DSM 17343 / BCRC 17206 / CCUG 44338 / CIP 107171 / LMG 19424 / R1) (Ralstonia taiwanensis (strain LMG 19424)).